A 61-amino-acid chain; its full sequence is Defensin BmKDfsin1 (61 aa).

The N-terminal stretch at 1-25 (MKTIVLLFVLVLVFALLVKMGMVEA) is a signal peptide. Intrachain disulfides connect Cys-29–Cys-50, Cys-36–Cys-58, and Cys-40–Cys-60.

Belongs to the invertebrate defensin family. Type 2 subfamily. In terms of tissue distribution, highly expressed in non-venom gland (hemolymph) and moderately expressed in venom gland.

Its subcellular location is the secreted. Antibacterial peptide active against Gram-positive bacteria, but not on Gram-negative bacteria. Also has weak blocking activity on Kv1.1/KCNA1, Kv1.2/KCNA2, Kv1.3/KCNA3, KCa3.1/KCNN4/IK, KCa2.3/KCNN3/SK3 and Kv11.1/KCNH2/ERG1 channels (tested at 1 uM). It inhibits potassium channel current by interacting with the pore region. In Olivierus martensii (Manchurian scorpion), this protein is Defensin BmKDfsin1.